The following is a 259-amino-acid chain: Ribosomal RNA small subunit methyltransferase A (259 aa).

Positions 13, 15, 40, 61, 85, and 105 each coordinate S-adenosyl-L-methionine.

This sequence belongs to the class I-like SAM-binding methyltransferase superfamily. rRNA adenine N(6)-methyltransferase family. RsmA subfamily.

It localises to the cytoplasm. It catalyses the reaction adenosine(1518)/adenosine(1519) in 16S rRNA + 4 S-adenosyl-L-methionine = N(6)-dimethyladenosine(1518)/N(6)-dimethyladenosine(1519) in 16S rRNA + 4 S-adenosyl-L-homocysteine + 4 H(+). Its function is as follows. Specifically dimethylates two adjacent adenosines (A1518 and A1519) in the loop of a conserved hairpin near the 3'-end of 16S rRNA in the 30S particle. May play a critical role in biogenesis of 30S subunits. This chain is Ribosomal RNA small subunit methyltransferase A, found in Mycoplasma genitalium (strain ATCC 33530 / DSM 19775 / NCTC 10195 / G37) (Mycoplasmoides genitalium).